The following is a 166-amino-acid chain: Phosphopantetheine adenylyltransferase (166 aa).

Thr10 provides a ligand contact to substrate. Residues 10 to 11 (TF) and His18 contribute to the ATP site. Residues Lys42, Leu74, and Arg88 each contribute to the substrate site. Residues 89 to 91 (GLR), Glu99, and 124 to 130 (NSFISSS) each bind ATP.

The protein belongs to the bacterial CoaD family. Homohexamer. It depends on Mg(2+) as a cofactor.

It localises to the cytoplasm. The catalysed reaction is (R)-4'-phosphopantetheine + ATP + H(+) = 3'-dephospho-CoA + diphosphate. Its pathway is cofactor biosynthesis; coenzyme A biosynthesis; CoA from (R)-pantothenate: step 4/5. Its function is as follows. Reversibly transfers an adenylyl group from ATP to 4'-phosphopantetheine, yielding dephospho-CoA (dPCoA) and pyrophosphate. The polypeptide is Phosphopantetheine adenylyltransferase (Idiomarina loihiensis (strain ATCC BAA-735 / DSM 15497 / L2-TR)).